Consider the following 301-residue polypeptide: Radial spoke head 1 homolog (301 aa).

A compositionally biased stretch (acidic residues) spans 1 to 20; that stretch reads MSDLGSEELEEEGENDLGEY. Positions 1 to 41 are disordered; sequence MSDLGSEELEEEGENDLGEYEGERNEVGERHGHGKARLPNG. 6 MORN repeats span residues 20-43, 44-66, 67-89, 90-112, 113-135, and 159-181; these read YEGERNEVGERHGHGKARLPNGDT, YEGSYEFGKRHGQGTYKFKNGAR, YTGDYVKNKKHGQGTFIYPDGSR, YEGEWADDQRHGQGVYYYVNNDT, YTGEWFNHQRHGQGTYLYAETGS, and YQGKFMNKNPVGPGKYVFDIGCE. Basic and acidic residues predominate over residues 21–31; the sequence is EGERNEVGERH. Positions 225–301 are disordered; it reads LSEEQPPPEG…FDEEPSDLQD (77 aa). Residues 249–261 are compositionally biased toward acidic residues; the sequence is PSEDIQAEGFEGE. The segment covering 262 to 278 has biased composition (basic and acidic residues); it reads LEPRGADEDVDTFRQES. A compositionally biased stretch (polar residues) spans 279–290; the sequence is QENSYDIDQGNL. The segment covering 292–301 has biased composition (acidic residues); the sequence is FDEEPSDLQD.

As to quaternary structure, component of the axonemal radial spoke 1 (RS1) and 2 (RS2) complexes, at least composed of spoke head proteins RSPH1, RSPH3, RSPH9 and the cilia-specific component RSPH4A or sperm-specific component RSPH6A, spoke stalk proteins RSPH14, DNAJB13, DYDC1, ROPN1L and NME5, and the RS1 complex-specific anchor protein IQUB. Interacts with RSPH3B. Interacts with RSPH4A. Interacts with RSPH6A. In terms of tissue distribution, expressed in the trachea, ependymal cells, oviduct and ependymal cells (at protein level). Germ cell specific. Specifically expressed in testis, and to a lower extent in ovary. Not expressed in somatic tissues.

The protein localises to the cytoplasm. Its subcellular location is the chromosome. It is found in the cytoskeleton. It localises to the cilium axoneme. The protein resides in the flagellum axoneme. In terms of biological role, functions as part of axonemal radial spoke complexes that play an important part in the motility of sperm and cilia. This is Radial spoke head 1 homolog (Rsph1) from Mus musculus (Mouse).